The primary structure comprises 235 residues: MAVVTLSEMMEAGAHFGHQTRRWNPKMQRYIHCARNGVHIIDLVQTAVCMNNAYKWVRSAARSGKRFLFVGTKKQAAEVVALEASRCGASYVNQRWLGGMLTNWSTMRARIERLKDLERMESSGAIAMRPKKEASVLRRELDRLQKYLGGLKNMRRLPDVVVLIDQKREYNAVLECQKLDIPVVSMLDTNCDPDLCDVPIPCNDDAVRSVQLIIGRLADAINEGRHGSNDQGDEG.

Belongs to the universal ribosomal protein uS2 family.

The protein is Small ribosomal subunit protein uS2 of Synechococcus sp. (strain RCC307).